The chain runs to 1437 residues: uncharacterized protein (1437 aa).

An N-terminal signal peptide occupies residues 1 to 25 (MRRGCRHHLAAVVLLIATFPPLAYN). Topologically, residues 26-1326 (QNIGGINQNI…SRIKENYFKW (1301 aa)) are extracellular. N-linked (GlcNAc...) asparagine glycosylation is found at N103, N315, N364, N492, N605, N676, and N914. Residues 193–356 (AFFGQQASQA…GRYMFRVDDV (164 aa)) form the NIDO domain. Residues 648-829 (VKEKSREMCH…FRCQMFYWRR (182 aa)) form the AMOP domain. Residues 1327–1347 (LAVIAGIVGIIIVILLIFLVF) traverse the membrane as a helical segment. Over 1348–1437 (WCIKRKKLQE…QGMLGLNTSV (90 aa)) the chain is Cytoplasmic. The segment at 1394–1419 (PRTVAMPPPRGTTATPMTLEPRGFSP) is disordered.

It is found in the membrane. This is an uncharacterized protein from Caenorhabditis elegans.